A 463-amino-acid polypeptide reads, in one-letter code: Phosphomethylpyrimidine synthase (463 aa).

Residues Asn80, Met109, Tyr138, His173, 193–195 (SRG), 234–237 (DGLR), and Glu273 contribute to the substrate site. Zn(2+) is bound at residue His277. Substrate is bound at residue Tyr300. His341 serves as a coordination point for Zn(2+). Positions 421, 424, and 429 each coordinate [4Fe-4S] cluster.

The protein belongs to the ThiC family. As to quaternary structure, homodimer. [4Fe-4S] cluster is required as a cofactor.

The enzyme catalyses 5-amino-1-(5-phospho-beta-D-ribosyl)imidazole + S-adenosyl-L-methionine = 4-amino-2-methyl-5-(phosphooxymethyl)pyrimidine + CO + 5'-deoxyadenosine + formate + L-methionine + 3 H(+). It functions in the pathway cofactor biosynthesis; thiamine diphosphate biosynthesis. Catalyzes the synthesis of the hydroxymethylpyrimidine phosphate (HMP-P) moiety of thiamine from aminoimidazole ribotide (AIR) in a radical S-adenosyl-L-methionine (SAM)-dependent reaction. This chain is Phosphomethylpyrimidine synthase, found in Anaeromyxobacter sp. (strain K).